The following is a 215-amino-acid chain: Probable transaldolase (215 aa).

The active-site Schiff-base intermediate with substrate is Lys83.

Belongs to the transaldolase family. Type 3B subfamily.

It is found in the cytoplasm. The enzyme catalyses D-sedoheptulose 7-phosphate + D-glyceraldehyde 3-phosphate = D-erythrose 4-phosphate + beta-D-fructose 6-phosphate. It participates in carbohydrate degradation; pentose phosphate pathway; D-glyceraldehyde 3-phosphate and beta-D-fructose 6-phosphate from D-ribose 5-phosphate and D-xylulose 5-phosphate (non-oxidative stage): step 2/3. Functionally, transaldolase is important for the balance of metabolites in the pentose-phosphate pathway. This is Probable transaldolase from Streptococcus agalactiae serotype III (strain NEM316).